Reading from the N-terminus, the 120-residue chain is Dense granule protein 5 (120 aa).

An N-terminal signal peptide occupies residues 1–25; it reads MASVKRVVVAVMIVNVLALIFVGVA. The disordered stretch occupies residues 27–59; sequence STRDVGSGGDDSEGARGREQQQVQQHEQNEDRS. A helical transmembrane segment spans residues 76 to 93; sequence AVGLAAAVVAVVSLLRLL. The segment covering 100-109 has biased composition (basic and acidic residues); the sequence is AIQEESKESA. A disordered region spans residues 100–120; sequence AIQEESKESATAEEEEVAEEE. Positions 110 to 120 are enriched in acidic residues; the sequence is TAEEEEVAEEE.

It localises to the secreted. Its subcellular location is the parasitophorous vacuole lumen. It is found in the parasitophorous vacuole membrane. The protein resides in the cytoplasmic vesicle. The protein localises to the secretory vesicle. Plays a role in the function of the cyst and parasitophorous vacuole membranes and therefore in host-parasite interactions. The polypeptide is Dense granule protein 5 (GRA5) (Toxoplasma gondii).